An 89-amino-acid polypeptide reads, in one-letter code: MAVTKDQTSQIVKKFKTSDLDTGSSEVQIALLTAKINDLTNHFAKHKKDHHGRRGLVTMVNKRRKLLDYLHRKDVKKYQDLIKALDIRK.

This sequence belongs to the universal ribosomal protein uS15 family. In terms of assembly, part of the 30S ribosomal subunit. Forms a bridge to the 50S subunit in the 70S ribosome, contacting the 23S rRNA.

Functionally, one of the primary rRNA binding proteins, it binds directly to 16S rRNA where it helps nucleate assembly of the platform of the 30S subunit by binding and bridging several RNA helices of the 16S rRNA. Its function is as follows. Forms an intersubunit bridge (bridge B4) with the 23S rRNA of the 50S subunit in the ribosome. The chain is Small ribosomal subunit protein uS15 from Bdellovibrio bacteriovorus (strain ATCC 15356 / DSM 50701 / NCIMB 9529 / HD100).